The chain runs to 163 residues: SKP1-like protein 4 (163 aa).

The interaction with the F-box domain of F-box proteins stretch occupies residues 105-163 (ILAANYLNIGGLLDLTCKAVADQMRGKTPEQMRAHFNIKNDYTPEEEAEVRNENKWAFE).

Belongs to the SKP1 family. Part of a SCF (SKP1-cullin-F-box) protein ligase complex. Interacts with At1g56610, At1g67340, At3g62230, At3g59000, At4g27050, At1g55000, SKIP16 and SKIP32. As to expression, mostly expressed in inflorescence and siliques, and, to a lower extent, in seedlings, roots, and stems.

The protein localises to the nucleus. The protein operates within protein modification; protein ubiquitination. Functionally, involved in ubiquitination and subsequent proteasomal degradation of target proteins. Together with CUL1, RBX1 and a F-box protein, it forms a SCF E3 ubiquitin ligase complex. The functional specificity of this complex depends on the type of F-box protein. In the SCF complex, it serves as an adapter that links the F-box protein to CUL1. The chain is SKP1-like protein 4 (ASK4) from Arabidopsis thaliana (Mouse-ear cress).